We begin with the raw amino-acid sequence, 312 residues long: Olfactory receptor 4L1 (312 aa).

Residues 1-25 (MDLKNGSLVTEFILLGFFGRWELQI) are Extracellular-facing. Asparagine 5 is a glycosylation site (N-linked (GlcNAc...) asparagine). A helical transmembrane segment spans residues 26-49 (FFFVTFSLIYGATVMGNILIMVTV). The Cytoplasmic segment spans residues 50–57 (TCRSTLHS). A helical membrane pass occupies residues 58 to 79 (PLYFLLGNLSFLDMCLSTATTP). Residues 80–100 (KMIIDLLTDHKTISVWGCVTQ) are Extracellular-facing. The cysteines at positions 97 and 189 are disulfide-linked. A helical transmembrane segment spans residues 101-120 (MFFMHFFGGAEMTLLIIMAF). At 121–139 (DRYVAICKPLHYRTIMSHK) the chain is on the cytoplasmic side. A helical transmembrane segment spans residues 140-158 (LLKGFAILSWIIGFLHSIS). The Extracellular portion of the chain corresponds to 159–195 (QIVLTMNLPFCGHNVINNIFCDLPLVIKLACIETYTL). The helical transmembrane segment at 196-219 (ELFVIADSGLLSFTCFILLLVSYI) threads the bilayer. The Cytoplasmic portion of the chain corresponds to 220-235 (VILVSVPKKSSHGLSK). Residues 236–258 (ALSTLSAHIIVVTLFFGPCIFIY) form a helical membrane-spanning segment. Over 259-269 (VWPFSSLASNK) the chain is Extracellular. Residue asparagine 268 is glycosylated (N-linked (GlcNAc...) asparagine). The chain crosses the membrane as a helical span at residues 270–289 (TLAVFYTVITPLLNPSIYTL). Residues 290-312 (RNKKMQEAIRKLRFQYVSSAQNF) lie on the Cytoplasmic side of the membrane.

It belongs to the G-protein coupled receptor 1 family.

Its subcellular location is the cell membrane. Functionally, odorant receptor. This is Olfactory receptor 4L1 (OR4L1) from Homo sapiens (Human).